A 540-amino-acid polypeptide reads, in one-letter code: Putative actin-fragmin kinase DDB_G0287957 (540 aa).

The stretch at 27–68 (KNENLNIKNEILNNNNNNNNNKNNNNNNNNNNNIENNSKNEN) forms a coiled coil. 2 disordered regions span residues 37–70 (ILNNNNNNNNNKNNNNNNNNNNNIENNSKNENFN) and 317–341 (NNNNNNNNNNNNNNNNNNNNNINNC).

Belongs to the protein kinase superfamily. AFK Ser/Thr protein kinase family.

The polypeptide is Putative actin-fragmin kinase DDB_G0287957 (Dictyostelium discoideum (Social amoeba)).